Reading from the N-terminus, the 656-residue chain is Protein EMBRYO SAC DEVELOPMENT ARREST 30 (656 aa).

A helical; Signal-anchor for type II membrane protein transmembrane segment spans residues 9 to 29; it reads WIALFVLILSMGSLVVHLSMT. N-linked (GlcNAc...) asparagine glycosylation is present at asparagine 119. Residues 381–426 are disordered; it reads LSELVGPETPLPENTYKMPPRKSDKQLKEEWNKAGPRPRPLPPPPD. The segment covering 401–412 has biased composition (basic and acidic residues); it reads RKSDKQLKEEWN. Pro residues predominate over residues 417–426; the sequence is RPRPLPPPPD. Asparagine 444, asparagine 522, asparagine 534, and asparagine 544 each carry an N-linked (GlcNAc...) asparagine glycan. The tract at residues 631-656 is disordered; the sequence is SETEEEFAKSKVASAFDQDEEWDPND. Over residues 647–656 the composition is skewed to acidic residues; sequence DQDEEWDPND.

It belongs to the glycosyltransferase GT106 family.

It is found in the membrane. Its pathway is glycan metabolism. This chain is Protein EMBRYO SAC DEVELOPMENT ARREST 30, found in Arabidopsis thaliana (Mouse-ear cress).